Consider the following 78-residue polypeptide: Omega-conotoxin-like ArMKLT1-011 (78 aa).

The signal sequence occupies residues 1–22 (MKLTCMMIVAVLFLTAWTSVTA). A propeptide spanning residues 23-48 (VNTRGELENLFLRASHEMNSEASKLD) is cleaved from the precursor. Intrachain disulfides connect cysteine 52–cysteine 69, cysteine 59–cysteine 73, and cysteine 68–cysteine 77.

The protein belongs to the conotoxin O1 superfamily. In terms of tissue distribution, expressed by the venom duct.

The protein localises to the secreted. Its function is as follows. Omega-conotoxins act at presynaptic membranes, they bind and block voltage-gated calcium channels (Cav). The polypeptide is Omega-conotoxin-like ArMKLT1-011 (Conus arenatus (Sand-dusted cone)).